Here is a 207-residue protein sequence, read N- to C-terminus: Dephospho-CoA kinase (207 aa).

In terms of domain architecture, DPCK spans 4 to 203; sequence VIGLTGGIAS…EEGYIEKPNY (200 aa). Residue 12 to 17 participates in ATP binding; that stretch reads ASGKST.

Belongs to the CoaE family.

The protein localises to the cytoplasm. The catalysed reaction is 3'-dephospho-CoA + ATP = ADP + CoA + H(+). The protein operates within cofactor biosynthesis; coenzyme A biosynthesis; CoA from (R)-pantothenate: step 5/5. Functionally, catalyzes the phosphorylation of the 3'-hydroxyl group of dephosphocoenzyme A to form coenzyme A. In Staphylococcus aureus (strain USA300), this protein is Dephospho-CoA kinase.